Here is a 227-residue protein sequence, read N- to C-terminus: Protein lin-28 (227 aa).

The segment covering 1–17 has biased composition (polar residues); that stretch reads MSTVVSEGRNDGNNRYS. Positions 1–27 are disordered; the sequence is MSTVVSEGRNDGNNRYSPQDEVEDRLP. The CSD domain occupies 52-120; the sequence is RYFGSCKWFN…GREAYAVSGE (69 aa). 2 consecutive CCHC-type zinc fingers follow at residues 143-160 and 166-183; these read RCFR…SCPN and KVCY…ICPE. Residues C144, C147, H153, C158, C168, C171, H176, and C181 each contribute to the Zn(2+) site. Residues 181–227 form a disordered region; sequence CPERRRKHRPEQVAAEEAEAARMAAEKSSPTTSDDDIREKNSNSSDE.

Belongs to the lin-28 family. As to quaternary structure, component of a complex at least containing lep-2, lin-28 and the long non-coding RNA lep-5, which mediates the degradation of lin-28. Post-translationally, cleavage by caspase ced-3 during larval development probably induces lin-28 degradation.

It is found in the cytoplasm. Heterochronic protein which controls the choice of stage specific cell fates. Regulates the timing of the second larval stage events (L2 events) in the hypodermis. May negatively regulate the larval to adult transition via the suppression of the microRNA (miRNA) let-7 during L3. Through this regulatory role, controls the timing of the sexual maturation of the nervous system. Also has a role in the fox-1-sex-1-mediated determination of sexual fate. Plays a role in governing the developmental timing of male tail tip morphogenesis. Plays a role in controlling the seam cell number during larval stages. Plays a role in vulval development. In Caenorhabditis elegans, this protein is Protein lin-28.